The chain runs to 142 residues: UPF0310 protein PYRAB08750 (142 aa).

The protein belongs to the UPF0310 family.

This chain is UPF0310 protein PYRAB08750, found in Pyrococcus abyssi (strain GE5 / Orsay).